The primary structure comprises 248 residues: Tyrosine recombinase XerD-like (248 aa).

Residues Met-1–Tyr-72 enclose the Core-binding (CB) domain. The Tyr recombinase domain maps to Ser-92–Met-248. Arg-213 is a catalytic residue. Tyr-245 (O-(3'-phospho-DNA)-tyrosine intermediate) is an active-site residue.

Belongs to the 'phage' integrase family. XerD-like subfamily.

It is found in the cytoplasm. Putative tyrosine recombinase. Not involved in the cutting and rejoining of the recombining DNA molecules on dif(SL) site. This chain is Tyrosine recombinase XerD-like, found in Streptococcus equi subsp. zooepidemicus (strain MGCS10565).